The chain runs to 552 residues: MAGUK p55 subfamily member 2 (552 aa).

2 consecutive L27 domains span residues 8–59 (SESA…EETK) and 60–118 (LEAV…YETP). Ser-42 is subject to Phosphoserine. A Phosphothreonine modification is found at Thr-117. Ser-121 carries the post-translational modification Phosphoserine. Positions 140 to 219 (MVGIRKTAGE…SVILKILPSY (80 aa)) constitute a PDZ domain. The SH3 domain maps to 225 to 293 (PRQVFVKCHF…PSQLLEEKRK (69 aa)). Residues 350–537 (RKTLVLIGAQ…TFRELQTAME (188 aa)) form the Guanylate kinase-like domain.

It belongs to the MAGUK family. As to quaternary structure, can homomultimerise. Interacts with CACNG2. Interacts (via the SH3-Guanylate kinase-like sub-module) with DLG4/PSD95 and DLGAP1/GKAP. Interacts (via the PDZ domain) with CADM1 (via C-terminus). Interacts with KCNN2/SK2 (via N-terminal domain). Interacts with SRC. Phosphorylated by SRC. In terms of tissue distribution, expressed in hippocampal neurons.

Its subcellular location is the cell projection. The protein resides in the dendrite. The protein localises to the postsynaptic density. It is found in the cytoplasm. It localises to the cytoskeleton. Its subcellular location is the membrane. Its function is as follows. Postsynaptic MAGUK scaffold protein that links CADM1 cell adhesion molecules to core components of the postsynaptic density. In CA1 pyramidal neurons, required for synaptic KCNN2-containing channel function and long-term potentiation expression. Seems to negatively regulate SRC function in epithelial cells. This is MAGUK p55 subfamily member 2 from Rattus norvegicus (Rat).